The following is a 404-amino-acid chain: Cysteine desulfurase IscS (404 aa).

Pyridoxal 5'-phosphate is bound by residues 75 to 76 (AT), asparagine 155, glutamine 183, and 203 to 205 (SAH). An N6-(pyridoxal phosphate)lysine modification is found at lysine 206. A pyridoxal 5'-phosphate-binding site is contributed by threonine 243. Cysteine 328 acts as the Cysteine persulfide intermediate in catalysis. Cysteine 328 lines the [2Fe-2S] cluster pocket.

Belongs to the class-V pyridoxal-phosphate-dependent aminotransferase family. NifS/IscS subfamily. Homodimer. Forms a heterotetramer with IscU, interacts with other sulfur acceptors. It depends on pyridoxal 5'-phosphate as a cofactor.

The protein resides in the cytoplasm. The catalysed reaction is (sulfur carrier)-H + L-cysteine = (sulfur carrier)-SH + L-alanine. Its pathway is cofactor biosynthesis; iron-sulfur cluster biosynthesis. Functionally, master enzyme that delivers sulfur to a number of partners involved in Fe-S cluster assembly, tRNA modification or cofactor biosynthesis. Catalyzes the removal of elemental sulfur atoms from cysteine to produce alanine. Functions as a sulfur delivery protein for Fe-S cluster synthesis onto IscU, an Fe-S scaffold assembly protein, as well as other S acceptor proteins. This Neisseria meningitidis serogroup C (strain 053442) protein is Cysteine desulfurase IscS.